Here is a 454-residue protein sequence, read N- to C-terminus: tRNA modification GTPase MnmE (454 aa).

(6S)-5-formyl-5,6,7,8-tetrahydrofolate-binding residues include arginine 23, glutamate 80, and lysine 120. The TrmE-type G domain maps to 216–377; sequence GMKVVIAGRP…LRNHLKQSMG (162 aa). Asparagine 226 is a K(+) binding site. Residues 226-231, 245-251, 270-273, 335-338, and 358-360 contribute to the GTP site; these read NAGKSS, TDIAGTT, DTAG, NKAD, and SAR. Serine 230 provides a ligand contact to Mg(2+). Residues threonine 245, isoleucine 247, and threonine 250 each contribute to the K(+) site. Threonine 251 provides a ligand contact to Mg(2+). Lysine 454 is a (6S)-5-formyl-5,6,7,8-tetrahydrofolate binding site.

The protein belongs to the TRAFAC class TrmE-Era-EngA-EngB-Septin-like GTPase superfamily. TrmE GTPase family. As to quaternary structure, homodimer. Heterotetramer of two MnmE and two MnmG subunits. The cofactor is K(+).

The protein localises to the cytoplasm. Exhibits a very high intrinsic GTPase hydrolysis rate. Involved in the addition of a carboxymethylaminomethyl (cmnm) group at the wobble position (U34) of certain tRNAs, forming tRNA-cmnm(5)s(2)U34. This Citrobacter koseri (strain ATCC BAA-895 / CDC 4225-83 / SGSC4696) protein is tRNA modification GTPase MnmE.